A 210-amino-acid polypeptide reads, in one-letter code: Regulator of G-protein signaling 17 (210 aa).

The disordered stretch occupies residues 1 to 21; that stretch reads MRKRQQSQNEGTPAVSQAPGN. Positions 84 to 200 constitute an RGS domain; it reads NFDKMMKAPA…LNSQIYKSFV (117 aa). Y137 is subject to Phosphotyrosine.

Interacts with GNAI1 and GNAQ. Interacts with GNAZ and GNAI2. Interacts with OPRM1. Forms a complex with mu-opioid receptors and G(alpha)z/i2 subunits, including GNAZ and GNAI2; the formation of this complex results in mu-opioid receptor desensitization. Interacts with HINT1. In terms of processing, N- and O-glycosylated in synapsomal membranes. Post-translationally, serine phosphorylated in synapsomal membranes. Sumoylated with SUMO1 and SUM02 in synaptosomes. The sumoylated forms act as a scaffold for sequestering mu-opioid receptor-activated G(alpha) subunits. Desumoylated by HINT1. Predominantly expressed in the cerebellum. Also expressed in the cortex and medulla. Weakly expressed in a number of peripheral tissues notably spleen, lung and leukocytes.

The protein resides in the membrane. It is found in the synapse. It localises to the synaptosome. Its subcellular location is the nucleus. The protein localises to the cytoplasm. In terms of biological role, regulates G protein-coupled receptor signaling cascades, including signaling via muscarinic acetylcholine receptor CHRM2 and dopamine receptor DRD2. Inhibits signal transduction by increasing the GTPase activity of G protein alpha subunits, thereby driving them into their inactive GDP-bound form. Binds selectively to GNAZ and GNAI2 subunits, accelerates their GTPase activity and regulates their signaling activities. Negatively regulates mu-opioid receptor-mediated activation of the G-proteins. The sequence is that of Regulator of G-protein signaling 17 (RGS17) from Homo sapiens (Human).